Consider the following 206-residue polypeptide: UPF0328 protein ECU01_0050/ECU01_1560 (206 aa).

Disordered regions lie at residues 1 to 153 (MPRP…HSHT) and 179 to 206 (GRLH…LATL). Residues 74–96 (HTEGCHTHEANPEPNTKHTETES) show a composition bias toward basic and acidic residues. 2 stretches are compositionally biased toward polar residues: residues 97–120 (PKPQ…SQNT) and 132–148 (SRPS…QSPH).

It belongs to the UPF0328 family.

The protein is UPF0328 protein ECU01_0050/ECU01_1560 of Encephalitozoon cuniculi (strain GB-M1) (Microsporidian parasite).